Here is a 217-residue protein sequence, read N- to C-terminus: Probable transaldolase (217 aa).

Lys83 acts as the Schiff-base intermediate with substrate in catalysis.

It belongs to the transaldolase family. Type 3B subfamily.

The protein resides in the cytoplasm. The catalysed reaction is D-sedoheptulose 7-phosphate + D-glyceraldehyde 3-phosphate = D-erythrose 4-phosphate + beta-D-fructose 6-phosphate. It participates in carbohydrate degradation; pentose phosphate pathway; D-glyceraldehyde 3-phosphate and beta-D-fructose 6-phosphate from D-ribose 5-phosphate and D-xylulose 5-phosphate (non-oxidative stage): step 2/3. Its function is as follows. Transaldolase is important for the balance of metabolites in the pentose-phosphate pathway. This Maricaulis maris (strain MCS10) (Caulobacter maris) protein is Probable transaldolase.